The following is a 217-amino-acid chain: Imidazole glycerol phosphate synthase subunit HisH (217 aa).

In terms of domain architecture, Glutamine amidotransferase type-1 spans 5-217; that stretch reads RVGIINYGVG…LRLLANFLTL (213 aa). Catalysis depends on Cys-93, which acts as the Nucleophile. Catalysis depends on residues His-199 and Glu-201.

In terms of assembly, heterodimer of HisH and HisF.

It localises to the cytoplasm. It carries out the reaction 5-[(5-phospho-1-deoxy-D-ribulos-1-ylimino)methylamino]-1-(5-phospho-beta-D-ribosyl)imidazole-4-carboxamide + L-glutamine = D-erythro-1-(imidazol-4-yl)glycerol 3-phosphate + 5-amino-1-(5-phospho-beta-D-ribosyl)imidazole-4-carboxamide + L-glutamate + H(+). The enzyme catalyses L-glutamine + H2O = L-glutamate + NH4(+). The protein operates within amino-acid biosynthesis; L-histidine biosynthesis; L-histidine from 5-phospho-alpha-D-ribose 1-diphosphate: step 5/9. Its function is as follows. IGPS catalyzes the conversion of PRFAR and glutamine to IGP, AICAR and glutamate. The HisH subunit catalyzes the hydrolysis of glutamine to glutamate and ammonia as part of the synthesis of IGP and AICAR. The resulting ammonia molecule is channeled to the active site of HisF. The chain is Imidazole glycerol phosphate synthase subunit HisH from Helicobacter hepaticus (strain ATCC 51449 / 3B1).